The chain runs to 201 residues: Transcription factor MYB82 (201 aa).

2 HTH myb-type domains span residues 9–61 (KSYV…KNYL) and 62–116 (RPNI…NKKP). 2 DNA-binding regions (H-T-H motif) span residues 37–61 (WADISRRSGLKRGGKSCRLRWKNYL) and 89–112 (WSLIAGRLPGRTDNEVKNYWNTHL). A disordered region spans residues 112–133 (LNKKPNSRRQNAPESIVGATPF).

As to quaternary structure, homodimer and heterodimer with GL1. Part of the WD40-bHLH-MYB complex. Interacts with BHLH012/MYC1 and BHLH042/TT8. Interacts (via N-terminus) with GL1 and GL3. Mainly expressed in the trichomes of new leaves.

The protein localises to the nucleus. Transcription activation factor positively regulating trichomes development. Has a function nearly equivalent to that of GL1 and can complement gl1 mutants. The chain is Transcription factor MYB82 (MYB82) from Arabidopsis thaliana (Mouse-ear cress).